A 640-amino-acid polypeptide reads, in one-letter code: F-box protein MET30 (640 aa).

Residues 1 to 19 (MRRERQRMMSFEDKDKDDL) show a composition bias toward basic and acidic residues. A disordered region spans residues 1–84 (MRRERQRMMS…ATNDSGTRVQ (84 aa)). The tract at residues 1 to 299 (MRRERQRMMS…KGHCRIQEFK (299 aa)) is necessary to mediate nuclear localization. Composition is skewed to polar residues over residues 45–56 (TGSSDDLAQGSS) and 64–82 (ATRS…SGTR). Residue serine 67 is modified to Phosphoserine. Positions 180–225 (KIDFISILPQELSLKILSYLDCQSLCNATRVCRKWQKLADDDRVWY) are interaction with SKP1/CBF3D. The important for mediating homomultimerization stretch occupies residues 180–277 (KIDFISILPQ…TQTTRPWKVI (98 aa)). The 47-residue stretch at 181–227 (IDFISILPQELSLKILSYLDCQSLCNATRVCRKWQKLADDDRVWYHM) folds into the F-box domain. The interval 277-640 (IYRERFKVES…VKMYKFDLND (364 aa)) is interaction with MET4. 8 WD repeats span residues 300–328 (GHMD…GIWD), 340–368 (GHSD…RVWN), 380–408 (GHSD…KVWH), 419–449 (GHTE…RMWD), 461–499 (GHVG…TMTD), 509–538 (NEQE…KLWD), 550–578 (GHVE…KVWD), and 607–635 (DKVA…KMYK). Over residues 481–495 (ATDNTSDGSSPQDDP) the composition is skewed to polar residues. The segment at 481 to 516 (ATDNTSDGSSPQDDPTMTDGADESDTPSNEQETVLD) is disordered.

This sequence belongs to the WD repeat MET30/SCONB/SCON-2 family. In terms of assembly, homomultimer. Interacts with CDC53 and SKP1/CBF3D to form the E3 ubiquitin ligase complex SCF(Met30). Interacts with MET4.

It is found in the cytoplasm. It localises to the nucleus. It functions in the pathway protein modification; protein ubiquitination. Substrate-recognition component of the SCF(Met30) complex, an E3 ubiquitin ligase complex that mediates the ubiquitination and subsequent proteasomal degradation of target proteins. Negatively regulates sulfur amino acids biosynthesis genes expression. Controls cell cycle function (being required for the G1/S transition and M-phase but not the S-phase), sulfur metabolism, and methionine biosynthesis as part of the SCF(Met30) complex. Required for the efficient binding of CDC45 and MCM proteins to origins of replication. Required for efficient expression of G1 cyclins. The SCF(Met30) complex catalyzes ubiquitination and degradation of the Cdk-inhibitory kinase SWE1. Involved in the S-adenosylmethionine (AdoMet)-mediated inhibition of the transcription function of MET4. The SCF(Met30) complex mediates ubiquitination and subsequent degradation of MET4 and the cellular response to cadmium. The SCF(Met30) complex acts as an inhibitor of autophagy by promoting ubiquitination and degradation of ATG9 in normal conditions. This Saccharomyces cerevisiae (strain ATCC 204508 / S288c) (Baker's yeast) protein is F-box protein MET30.